Consider the following 227-residue polypeptide: MAYPMQLGLQDATSPIMEELTDFHDHTLMIVFLISTLVLYIISMMLTTKLTHTSTMDAQEVETIWTVLPAVILVMIALPSLRILYMMDEINDPYLTVKTMGHQWYWSYEYTDYEDLMFDSYMIATSDLKPGEFRLLEVDNRVVLPMELPIRMLVSSEDVLHSWAVPSLGLKTDAIPGRLNQATLVSSRPGLFYGQCSEICGANHSFMPIVLEMVPLKQFESWASSMT.

At 1-14 (MAYPMQLGLQDATS) the chain is on the mitochondrial intermembrane side. Residues 15–45 (PIMEELTDFHDHTLMIVFLISTLVLYIISMM) traverse the membrane as a helical segment. The Mitochondrial matrix segment spans residues 46–59 (LTTKLTHTSTMDAQ). A helical membrane pass occupies residues 60 to 87 (EVETIWTVLPAVILVMIALPSLRILYMM). The Mitochondrial intermembrane segment spans residues 88 to 227 (DEINDPYLTV…QFESWASSMT (140 aa)). 6 residues coordinate Cu cation: histidine 161, cysteine 196, glutamate 198, cysteine 200, histidine 204, and methionine 207. Glutamate 198 lines the Mg(2+) pocket.

Belongs to the cytochrome c oxidase subunit 2 family. Component of the cytochrome c oxidase (complex IV, CIV), a multisubunit enzyme composed of 14 subunits. The complex is composed of a catalytic core of 3 subunits MT-CO1, MT-CO2 and MT-CO3, encoded in the mitochondrial DNA, and 11 supernumerary subunits COX4I, COX5A, COX5B, COX6A, COX6B, COX6C, COX7A, COX7B, COX7C, COX8 and NDUFA4, which are encoded in the nuclear genome. The complex exists as a monomer or a dimer and forms supercomplexes (SCs) in the inner mitochondrial membrane with NADH-ubiquinone oxidoreductase (complex I, CI) and ubiquinol-cytochrome c oxidoreductase (cytochrome b-c1 complex, complex III, CIII), resulting in different assemblies (supercomplex SCI(1)III(2)IV(1) and megacomplex MCI(2)III(2)IV(2)). Found in a complex with TMEM177, COA6, COX18, COX20, SCO1 and SCO2. Interacts with TMEM177 in a COX20-dependent manner. Interacts with COX20. Interacts with COX16. Requires Cu cation as cofactor.

It is found in the mitochondrion inner membrane. The enzyme catalyses 4 Fe(II)-[cytochrome c] + O2 + 8 H(+)(in) = 4 Fe(III)-[cytochrome c] + 2 H2O + 4 H(+)(out). In terms of biological role, component of the cytochrome c oxidase, the last enzyme in the mitochondrial electron transport chain which drives oxidative phosphorylation. The respiratory chain contains 3 multisubunit complexes succinate dehydrogenase (complex II, CII), ubiquinol-cytochrome c oxidoreductase (cytochrome b-c1 complex, complex III, CIII) and cytochrome c oxidase (complex IV, CIV), that cooperate to transfer electrons derived from NADH and succinate to molecular oxygen, creating an electrochemical gradient over the inner membrane that drives transmembrane transport and the ATP synthase. Cytochrome c oxidase is the component of the respiratory chain that catalyzes the reduction of oxygen to water. Electrons originating from reduced cytochrome c in the intermembrane space (IMS) are transferred via the dinuclear copper A center (CU(A)) of subunit 2 and heme A of subunit 1 to the active site in subunit 1, a binuclear center (BNC) formed by heme A3 and copper B (CU(B)). The BNC reduces molecular oxygen to 2 water molecules using 4 electrons from cytochrome c in the IMS and 4 protons from the mitochondrial matrix. The protein is Cytochrome c oxidase subunit 2 (MT-CO2) of Cratogeomys bursarius (Plains pocket gopher).